The following is a 203-amino-acid chain: Outer-membrane lipoprotein LolB (203 aa).

An N-terminal signal peptide occupies residues 1–18 (MTLRSFLIFFLSSLILAG). The N-palmitoyl cysteine moiety is linked to residue cysteine 19. Residue cysteine 19 is the site of S-diacylglycerol cysteine attachment.

The protein belongs to the LolB family. Monomer.

The protein localises to the cell outer membrane. In terms of biological role, plays a critical role in the incorporation of lipoproteins in the outer membrane after they are released by the LolA protein. This Vibrio parahaemolyticus serotype O3:K6 (strain RIMD 2210633) protein is Outer-membrane lipoprotein LolB.